The sequence spans 210 residues: MKFFVVIVFCAIFLSVSGDSDNMQDTCPTAPGEQSIFFINGYPCKNPTKITAQDFKSTKLTEAGDTDNYLQSNVTLLTALEFPGLNTLGLSVSRTDLERDGSVPFHSHPRSSEMLFVVKGVVFAGFVDTNNKIFQTVLQKGDVFVFPKGLLHFCLSGGFEPATAFSFYNSQNPGVVNIGEVFGIDQEHIKIMTRCLATGSGCRVTDGDEL.

A signal peptide spans 1-18 (MKFFVVIVFCAIFLSVSG). Cysteine 27 and cysteine 44 are joined by a disulfide. A Cupin type-1 domain is found at 58 to 190 (TKLTEAGDTD…VFGIDQEHIK (133 aa)). Asparagine 73 is a glycosylation site (N-linked (GlcNAc...) asparagine). The Mn(2+) site is built by histidine 106, histidine 108, glutamate 113, and histidine 152.

It belongs to the germin family. As to quaternary structure, oligomer (believed to be a pentamer but probably hexamer).

The protein localises to the secreted. The protein resides in the extracellular space. It is found in the apoplast. Its function is as follows. May play a role in plant defense. Probably has no oxalate oxidase activity even if the active site is conserved. This Arabidopsis thaliana (Mouse-ear cress) protein is Germin-like protein subfamily 3 member 4.